A 230-amino-acid chain; its full sequence is uncharacterized protein (230 aa).

10–34 (VVTGASSGIGEAIAKKLSQQGASIV) is an NADP(+) binding site. Ser-139 lines the substrate pocket. Tyr-152 (proton acceptor) is an active-site residue.

Belongs to the short-chain dehydrogenases/reductases (SDR) family.

This is an uncharacterized protein from Staphylococcus epidermidis (strain ATCC 12228 / FDA PCI 1200).